The sequence spans 206 residues: Dephospho-CoA kinase (206 aa).

In terms of domain architecture, DPCK spans 6–206; it reads IIGLTGGIAS…KWKWKDWSKK (201 aa). 14-19 lines the ATP pocket; that stretch reads ASGKST.

This sequence belongs to the CoaE family.

It is found in the cytoplasm. It carries out the reaction 3'-dephospho-CoA + ATP = ADP + CoA + H(+). The protein operates within cofactor biosynthesis; coenzyme A biosynthesis; CoA from (R)-pantothenate: step 5/5. Functionally, catalyzes the phosphorylation of the 3'-hydroxyl group of dephosphocoenzyme A to form coenzyme A. The chain is Dephospho-CoA kinase from Carboxydothermus hydrogenoformans (strain ATCC BAA-161 / DSM 6008 / Z-2901).